The sequence spans 629 residues: tRNA uridine 5-carboxymethylaminomethyl modification enzyme MnmG (629 aa).

FAD-binding positions include 13 to 18 (GGGHAG), Val-125, and Ser-180. 273 to 287 (GPRYCPSIEDKVMRF) lines the NAD(+) pocket. An FAD-binding site is contributed by Gln-370.

Belongs to the MnmG family. As to quaternary structure, homodimer. Heterotetramer of two MnmE and two MnmG subunits. FAD is required as a cofactor.

Its subcellular location is the cytoplasm. NAD-binding protein involved in the addition of a carboxymethylaminomethyl (cmnm) group at the wobble position (U34) of certain tRNAs, forming tRNA-cmnm(5)s(2)U34. The protein is tRNA uridine 5-carboxymethylaminomethyl modification enzyme MnmG of Salmonella arizonae (strain ATCC BAA-731 / CDC346-86 / RSK2980).